We begin with the raw amino-acid sequence, 97 residues long: Antitoxin YafN (97 aa).

The protein belongs to the phD/YefM antitoxin family. As to quaternary structure, probably forms a complex with the mRNA interferase YafO which inhibits the mRNA interferase activity.

Its function is as follows. Antitoxin component of a type II toxin-antitoxin (TA) system. Functions as an mRNA interferase antitoxin; overexpression prevents YafO-mediated cessation of cell growth and inhibition of cell proliferation. In Escherichia coli (strain K12), this protein is Antitoxin YafN (yafN).